The chain runs to 108 residues: Small ribosomal subunit protein mS33 (108 aa).

Residues 84–108 (LRARDKGAPKKKRTAPSAADAKKKK) are disordered.

It belongs to the mitochondrion-specific ribosomal protein mS33 family. In terms of assembly, component of the mitochondrial small ribosomal subunit (mt-SSU). Mature N.crassa 74S mitochondrial ribosomes consist of a small (37S) and a large (54S) subunit. The 37S small subunit contains a 16S ribosomal RNA (16S mt-rRNA) and 32 different proteins. The 54S large subunit contains a 23S rRNA (23S mt-rRNA) and 42 different proteins.

The protein localises to the mitochondrion. Functionally, component of the mitochondrial ribosome (mitoribosome), a dedicated translation machinery responsible for the synthesis of mitochondrial genome-encoded proteins, including at least some of the essential transmembrane subunits of the mitochondrial respiratory chain. The mitoribosomes are attached to the mitochondrial inner membrane and translation products are cotranslationally integrated into the membrane. In Neurospora crassa (strain ATCC 24698 / 74-OR23-1A / CBS 708.71 / DSM 1257 / FGSC 987), this protein is Small ribosomal subunit protein mS33 (rsm27).